The sequence spans 145 residues: D-aminoacyl-tRNA deacylase (145 aa).

A Gly-cisPro motif, important for rejection of L-amino acids motif is present at residues 137 to 138; it reads GP.

Belongs to the DTD family. As to quaternary structure, homodimer.

It localises to the cytoplasm. The catalysed reaction is glycyl-tRNA(Ala) + H2O = tRNA(Ala) + glycine + H(+). The enzyme catalyses a D-aminoacyl-tRNA + H2O = a tRNA + a D-alpha-amino acid + H(+). Functionally, an aminoacyl-tRNA editing enzyme that deacylates mischarged D-aminoacyl-tRNAs. Also deacylates mischarged glycyl-tRNA(Ala), protecting cells against glycine mischarging by AlaRS. Acts via tRNA-based rather than protein-based catalysis; rejects L-amino acids rather than detecting D-amino acids in the active site. By recycling D-aminoacyl-tRNA to D-amino acids and free tRNA molecules, this enzyme counteracts the toxicity associated with the formation of D-aminoacyl-tRNA entities in vivo and helps enforce protein L-homochirality. This Cereibacter sphaeroides (strain ATCC 17029 / ATH 2.4.9) (Rhodobacter sphaeroides) protein is D-aminoacyl-tRNA deacylase.